A 306-amino-acid polypeptide reads, in one-letter code: Ethylmalonyl-CoA decarboxylase (306 aa).

The residue at position 216 (Lys-216) is an N6-acetyllysine; alternate. An N6-succinyllysine; alternate modification is found at Lys-216.

Belongs to the enoyl-CoA hydratase/isomerase family.

The protein localises to the cytoplasm. The protein resides in the cytosol. It carries out the reaction (2S)-ethylmalonyl-CoA + H(+) = butanoyl-CoA + CO2. It catalyses the reaction (S)-methylmalonyl-CoA + H(+) = propanoyl-CoA + CO2. The catalysed reaction is (2R)-ethylmalonyl-CoA + H(+) = butanoyl-CoA + CO2. Its function is as follows. Decarboxylates ethylmalonyl-CoA, a potentially toxic metabolite, to form butyryl-CoA, suggesting it might be involved in metabolite proofreading. Acts preferentially on (S)-ethylmalonyl-CoA but also has some activity on the (R)-isomer. Also has methylmalonyl-CoA decarboxylase activity at lower level. This chain is Ethylmalonyl-CoA decarboxylase (ECHDC1), found in Bos taurus (Bovine).